The following is a 580-amino-acid chain: MTNHEQVLTDYLAAFIEELVQAGVKEAIISPGSRSTPLALMMAEHPTLKIYVDVDERSAGFFALGLAKASKRPVVLLCTSGTAAANYFPAVVEANLSQIPLIVLTADRPHELRNVGAPQAMDQLHLYGSHVKDFTDMALPENSDEMLRYAKWHSSRAVDIAMKTPRGPVHLNFPLREPLVPILEPSPFTATGKKHHHVHIYYTHEVLDDSSIQKMVTECTGKKGVFVVGPIDKKELEQPMVDLAKKLGWPILADPLSGLRSYGAMDEVVIDQYDAFLKEADILDKLTPEVVIRFGSMPVSKPLKNWLEHLFGIRFYVVDPGAAWKDPIKAVTDMIHCDERFLLDIMQQNMPDDTKDASWLNRWTSYNQKAREIVLEEMANTTTLEEGKIVSELRRLLPDKAGLFIGNSMPIRDVDTYFSQIDKKIKMLANRGANGIDGVVSSALGASVVFQPMFLLIGDLSFYHDMNGLLMAKKYKMNLTIIIVNNDGGGIFSFLPQANEPKYFESLFGTSTELDFRFAAAFYDADYHEAKSVDSLEEAIDKASYHKGLDIIEVKTNRHENKANHQALWEKIATALKALD.

The protein belongs to the TPP enzyme family. MenD subfamily. Homodimer. It depends on Mg(2+) as a cofactor. Mn(2+) serves as cofactor. The cofactor is thiamine diphosphate.

It catalyses the reaction isochorismate + 2-oxoglutarate + H(+) = 5-enolpyruvoyl-6-hydroxy-2-succinyl-cyclohex-3-ene-1-carboxylate + CO2. It participates in quinol/quinone metabolism; 1,4-dihydroxy-2-naphthoate biosynthesis; 1,4-dihydroxy-2-naphthoate from chorismate: step 2/7. The protein operates within quinol/quinone metabolism; menaquinone biosynthesis. Catalyzes the thiamine diphosphate-dependent decarboxylation of 2-oxoglutarate and the subsequent addition of the resulting succinic semialdehyde-thiamine pyrophosphate anion to isochorismate to yield 2-succinyl-5-enolpyruvyl-6-hydroxy-3-cyclohexene-1-carboxylate (SEPHCHC). This chain is 2-succinyl-5-enolpyruvyl-6-hydroxy-3-cyclohexene-1-carboxylate synthase, found in Listeria innocua serovar 6a (strain ATCC BAA-680 / CLIP 11262).